We begin with the raw amino-acid sequence, 289 residues long: Protease HtpX (289 aa).

Transmembrane regions (helical) follow at residues Ile-5–Leu-25 and Met-33–Leu-53. A Zn(2+)-binding site is contributed by His-140. The active site involves Glu-141. Residue His-144 coordinates Zn(2+). A run of 2 helical transmembrane segments spans residues Leu-155–Ile-175 and Gly-193–Phe-213. Glu-218 lines the Zn(2+) pocket.

Belongs to the peptidase M48B family. Requires Zn(2+) as cofactor.

The protein resides in the cell inner membrane. This is Protease HtpX from Xylella fastidiosa (strain M12).